A 245-amino-acid polypeptide reads, in one-letter code: Proteasome subunit alpha type-7-1B (245 aa).

It belongs to the peptidase T1A family. The 26S proteasome consists of a 20S proteasome core and two 19S regulatory subunits. The 20S proteasome core is composed of 28 subunits that are arranged in four stacked rings, resulting in a barrel-shaped structure. The two end rings are each formed by seven alpha subunits, and the two central rings are each formed by seven beta subunits. The catalytic chamber with the active sites is on the inside of the barrel. In terms of tissue distribution, testis specific.

It localises to the cytoplasm. Its subcellular location is the nucleus. In terms of biological role, the proteasome is a multicatalytic proteinase complex which is characterized by its ability to cleave peptides with Arg, Phe, Tyr, Leu, and Glu adjacent to the leaving group at neutral or slightly basic pH. The proteasome has an ATP-dependent proteolytic activity. This Drosophila virilis (Fruit fly) protein is Proteasome subunit alpha type-7-1B (Pros28.1B).